A 364-amino-acid polypeptide reads, in one-letter code: Fructose-bisphosphate aldolase B (364 aa).

N-acetylalanine is present on alanine 2. The residue at position 13 (lysine 13) is an N6-succinyllysine. Serine 36 bears the Phosphoserine mark. Threonine 39 carries the post-translational modification Phosphothreonine. Arginine 43 contributes to the beta-D-fructose 1,6-bisphosphate binding site. A Phosphoserine modification is found at serine 89. Threonine 119 carries the phosphothreonine modification. The residue at position 121 (lysine 121) is an N6-succinyllysine. Phosphoserine is present on serine 132. Glutamate 188 serves as the catalytic Proton acceptor. Catalysis depends on lysine 230, which acts as the Schiff-base intermediate with dihydroxyacetone-P. A phosphoserine mark is found at serine 272, serine 276, serine 299, and serine 301. Residue 272–274 participates in beta-D-fructose 1,6-bisphosphate binding; it reads SGG. Arginine 304 is a beta-D-fructose 1,6-bisphosphate binding site. The residue at position 309 (serine 309) is a Phosphoserine. Lysine 317 bears the N6-succinyllysine mark.

The protein belongs to the class I fructose-bisphosphate aldolase family. As to quaternary structure, homotetramer. Interacts with BBS1, BBS2, BBS4 and BBS7. Forms a ternary complex with G6PD and TP53; this interaction is direct.

It localises to the cytoplasm. It is found in the cytosol. The protein resides in the cytoskeleton. Its subcellular location is the microtubule organizing center. The protein localises to the centrosome. It localises to the centriolar satellite. It carries out the reaction beta-D-fructose 1,6-bisphosphate = D-glyceraldehyde 3-phosphate + dihydroxyacetone phosphate. The enzyme catalyses beta-D-fructose 1-phosphate = D-glyceraldehyde + dihydroxyacetone phosphate. The protein operates within carbohydrate degradation; glycolysis; D-glyceraldehyde 3-phosphate and glycerone phosphate from D-glucose: step 4/4. It functions in the pathway carbohydrate biosynthesis; gluconeogenesis. It participates in carbohydrate metabolism; fructose metabolism. Its function is as follows. Catalyzes the aldol cleavage of fructose 1,6-biphosphate to form two triosephosphates dihydroxyacetone phosphate and D-glyceraldehyde 3-phosphate in glycolysis as well as the reverse stereospecific aldol addition reaction in gluconeogenesis. In fructolysis, metabolizes fructose 1-phosphate derived from the phosphorylation of dietary fructose by fructokinase into dihydroxyacetone phosphate and D-glyceraldehyde. Acts as an adapter independently of its enzymatic activity, exerts a tumor suppressor role by stabilizing the ternary complex with G6PD and TP53 to inhibit G6PD activity and keep oxidative pentose phosphate metabolism in check. The chain is Fructose-bisphosphate aldolase B (ALDOB) from Oryctolagus cuniculus (Rabbit).